The sequence spans 29 residues: Glucagon (29 aa).

Serine 2 bears the Phosphoserine mark.

Belongs to the glucagon family.

The protein localises to the secreted. Functionally, glucagon plays a key role in glucose metabolism and homeostasis. Regulates blood glucose by increasing gluconeogenesis and decreasing glycolysis. The sequence is that of Glucagon (GCG) from Chinchilla chinchilla (Short-tailed chinchilla).